The sequence spans 359 residues: Carbamoyl phosphate synthase arginine-specific small chain (359 aa).

The tract at residues 1–168 (MKAYLVLATG…VETFEGNGPH (168 aa)) is CPSase. Ser45, Gly216, and Gly218 together coordinate L-glutamine. In terms of domain architecture, Glutamine amidotransferase type-1 spans 168 to 355 (HIVLIDYGFK…IDDVAAKGRE (188 aa)). Cys243 functions as the Nucleophile in the catalytic mechanism. L-glutamine contacts are provided by Leu244, Gln247, Asn285, and Tyr288. Residues His328 and Glu330 contribute to the active site.

The protein belongs to the CarA family. Composed of two chains; the small (or glutamine) chain promotes the hydrolysis of glutamine to ammonia, which is used by the large (or ammonia) chain to synthesize carbamoyl phosphate. Tetramer of heterodimers (alpha,beta)4.

The catalysed reaction is hydrogencarbonate + L-glutamine + 2 ATP + H2O = carbamoyl phosphate + L-glutamate + 2 ADP + phosphate + 2 H(+). It carries out the reaction L-glutamine + H2O = L-glutamate + NH4(+). The protein operates within amino-acid biosynthesis; L-arginine biosynthesis; carbamoyl phosphate from bicarbonate: step 1/1. In terms of biological role, small subunit of the glutamine-dependent carbamoyl phosphate synthetase (CPSase). CPSase catalyzes the formation of carbamoyl phosphate from the ammonia moiety of glutamine, carbonate, and phosphate donated by ATP, constituting the first step of the biosynthetic pathway leading to arginine and/or urea. The small subunit (glutamine amidotransferase) binds and cleaves glutamine to supply the large subunit with the substrate ammonia. This is Carbamoyl phosphate synthase arginine-specific small chain from Halalkalibacterium halodurans (strain ATCC BAA-125 / DSM 18197 / FERM 7344 / JCM 9153 / C-125) (Bacillus halodurans).